A 657-amino-acid polypeptide reads, in one-letter code: Glycogen debranching enzyme (657 aa).

The Nucleophile role is filled by Asp-336. The Proton donor role is filled by Glu-371. The span at 458–467 (NEANGEENRD) shows a compositional bias: basic and acidic residues. The disordered stretch occupies residues 458–479 (NEANGEENRDGTNNNYSNNHGK).

It belongs to the glycosyl hydrolase 13 family.

It carries out the reaction Hydrolysis of (1-&gt;6)-alpha-D-glucosidic linkages to branches with degrees of polymerization of three or four glucose residues in limit dextrin.. The protein operates within glycan degradation; glycogen degradation. Its function is as follows. Removes maltotriose and maltotetraose chains that are attached by 1,6-alpha-linkage to the limit dextrin main chain, generating a debranched limit dextrin. The protein is Glycogen debranching enzyme of Escherichia coli (strain K12 / DH10B).